The chain runs to 457 residues: Protein OS-9 homolog (457 aa).

Residues 1-22 (MIFLPVTSVVFAISWIYSGVSA) form the signal peptide. N-linked (GlcNAc...) asparagine glycosylation is found at N47 and N71. Residues 104-222 (NPIEMNTVPI…RLFLPQLCEL (119 aa)) enclose the MRH domain. Residue W116 coordinates a mannooligosaccharide derivative. 2 N-linked (GlcNAc...) asparagine glycosylation sites follow: N142 and N147. 2 disulfide bridges follow: C174-C208 and C189-C220. D175, R181, E204, and Y210 together coordinate a mannooligosaccharide derivative. The N-linked (GlcNAc...) asparagine glycan is linked to N389.

It belongs to the OS-9 family. Interacts with missfolded ER lumenal proteins.

Its subcellular location is the endoplasmic reticulum membrane. Its function is as follows. Lectin involved in the quality control of the secretory pathway. As a member of the endoplasmic reticulum-associated degradation lumenal (ERAD-L) surveillance system, targets misfolded endoplasmic reticulum lumenal glycoproteins for degradation. The chain is Protein OS-9 homolog (YOS9) from Kluyveromyces lactis (strain ATCC 8585 / CBS 2359 / DSM 70799 / NBRC 1267 / NRRL Y-1140 / WM37) (Yeast).